The sequence spans 228 residues: Leucokinins (228 aa).

The signal sequence occupies residues 1–18 (MAMLLQVALPLLAAVSWG). Positions 19–164 (WELNENDDSL…PRFSPVSAIQ (146 aa)) are excised as a propeptide. The interval 80-118 (EFSENNEAEDKSPTSAQNTQEHIPGNNFPPPAASNPPVN) is disordered. Glycine amide is present on residues G180 and G193. Residues 197–209 (NTGRVHRQPKVVI) constitute a propeptide that is removed on maturation. A Glycine amide modification is found at G217. The propeptide occupies 221 to 228 (NQKDDNVF).

It is found in the secreted. Functionally, stimulates both fluid secretion by the Malpighian tubules and hindgut contractions. Depolarize the transepithelial voltage of the Malpighian tubules in concentrations of less than 10(-9) M and increase the frequency of hindgut contractions at concentrations above 10(-8) M. The protein is Leucokinins of Aedes aegypti (Yellowfever mosquito).